A 284-amino-acid polypeptide reads, in one-letter code: Phosphatidylglycerol--prolipoprotein diacylglyceryl transferase (284 aa).

7 consecutive transmembrane segments (helical) span residues 14 to 34, 62 to 82, 106 to 126, 136 to 156, 190 to 210, 218 to 238, and 252 to 272; these read IAFSLGSIEVHWYGLAYACAI, YFLWAELGIVLGARVGYILIY, FVGIRGMSYHGGLVGFLIASY, LLIYLDLIAISLPLGYVFGRI, PSQLIEAFLEGVIVFLMVLWA, GLLIVVYGLGYSLMRFIAEFY, and LSMGQILSLLMVIVSLGILLY. R155 contacts a 1,2-diacyl-sn-glycero-3-phospho-(1'-sn-glycerol).

It belongs to the Lgt family.

It localises to the cell inner membrane. The catalysed reaction is L-cysteinyl-[prolipoprotein] + a 1,2-diacyl-sn-glycero-3-phospho-(1'-sn-glycerol) = an S-1,2-diacyl-sn-glyceryl-L-cysteinyl-[prolipoprotein] + sn-glycerol 1-phosphate + H(+). Its pathway is protein modification; lipoprotein biosynthesis (diacylglyceryl transfer). In terms of biological role, catalyzes the transfer of the diacylglyceryl group from phosphatidylglycerol to the sulfhydryl group of the N-terminal cysteine of a prolipoprotein, the first step in the formation of mature lipoproteins. This is Phosphatidylglycerol--prolipoprotein diacylglyceryl transferase from Helicobacter pylori (strain Shi470).